Consider the following 176-residue polypeptide: Probable DNA-directed RNA polymerase subunit delta (176 aa).

The 68-residue stretch at 14–81 (CSMIEVVHSV…GENRWGLRSW (68 aa)) folds into the HTH HARE-type domain. Residues 90-176 (EILPQPKPKK…ETEEEEEEEL (87 aa)) form a disordered region. Acidic residues predominate over residues 106–176 (DGFDDYIEED…ETEEEEEEEL (71 aa)).

This sequence belongs to the RpoE family. In terms of assembly, RNAP is composed of a core of 2 alpha, a beta and a beta' subunits. The core is associated with a delta subunit and one of several sigma factors.

Functionally, participates in both the initiation and recycling phases of transcription. In the presence of the delta subunit, RNAP displays an increased specificity of transcription, a decreased affinity for nucleic acids, and an increased efficiency of RNA synthesis because of enhanced recycling. The chain is Probable DNA-directed RNA polymerase subunit delta from Bacillus thuringiensis subsp. konkukian (strain 97-27).